The chain runs to 369 residues: Galactose-1-phosphate uridylyltransferase (369 aa).

Zn(2+) is bound by residues Cys54 and Cys57. UDP-alpha-D-glucose-binding positions include Ala63 and 79-80; that span reads ND. Residue His127 participates in Zn(2+) binding. Residue Asn172 coordinates UDP-alpha-D-glucose. Zn(2+) is bound at residue His183. The active-site Tele-UMP-histidine intermediate is His185. Gln187 contacts UDP-alpha-D-glucose. Residues Glu201, His300, His317, and His319 each coordinate Fe cation. Residues 332–335 and 337–338 each bind UDP-alpha-D-glucose; these read KFCV and FE.

Belongs to the galactose-1-phosphate uridylyltransferase type 1 family. As to quaternary structure, homodimer. Zn(2+) is required as a cofactor.

The catalysed reaction is alpha-D-galactose 1-phosphate + UDP-alpha-D-glucose = alpha-D-glucose 1-phosphate + UDP-alpha-D-galactose. Its pathway is carbohydrate metabolism; galactose metabolism. This Schizosaccharomyces pombe (strain 972 / ATCC 24843) (Fission yeast) protein is Galactose-1-phosphate uridylyltransferase (gal7).